The chain runs to 127 residues: Large ribosomal subunit protein bL17 (127 aa).

Belongs to the bacterial ribosomal protein bL17 family. As to quaternary structure, part of the 50S ribosomal subunit. Contacts protein L32.

This is Large ribosomal subunit protein bL17 from Aeromonas hydrophila subsp. hydrophila (strain ATCC 7966 / DSM 30187 / BCRC 13018 / CCUG 14551 / JCM 1027 / KCTC 2358 / NCIMB 9240 / NCTC 8049).